The primary structure comprises 106 residues: UPF0145 protein CLH_2273 (106 aa).

This sequence belongs to the UPF0145 family.

This Clostridium botulinum (strain Alaska E43 / Type E3) protein is UPF0145 protein CLH_2273.